A 417-amino-acid chain; its full sequence is Neuropeptide FF receptor 2 (417 aa).

Topologically, residues 1 to 45 are extracellular; that stretch reads MGKRWDSNSSGSWDHIWSGNDTQHPWYSDINITYMNYYLHQPHVT. Asn8, Asn20, and Asn31 each carry an N-linked (GlcNAc...) asparagine glycan. Residues 46-66 form a helical membrane-spanning segment; sequence AVFISSYFLIFFLCMVGNTVV. At 67-82 the chain is on the cytoplasmic side; it reads CFVVIRNRYMHTVTNF. Residues 83–103 traverse the membrane as a helical segment; it reads FIFNLAISDLLVGIFCMPITL. Residues 104–119 lie on the Extracellular side of the membrane; the sequence is LDNIIAGWPFGSSMCK. An intrachain disulfide couples Cys118 to Cys206. Residues 120–140 traverse the membrane as a helical segment; that stretch reads ISGLVQGISVAASVFTLVAIA. The Cytoplasmic portion of the chain corresponds to 141–160; it reads VDRFRCVVYPFKPKLTVKTA. Residues 161–181 form a helical membrane-spanning segment; it reads FVMIVIIWGLAITIMTPSAIM. Residues 182-217 lie on the Extracellular side of the membrane; it reads LHVQEEKYYRVRLSSHNKTSTVYWCREDWPNQEMRR. An N-linked (GlcNAc...) asparagine glycan is attached at Asn198. The helical transmembrane segment at 218–238 threads the bilayer; sequence IYTTVLFATIYLAPLSLIVIM. At 239–274 the chain is on the cytoplasmic side; sequence YARIGASLFKTSAHSTGKQRLEQWHVSKKKQKVIKM. Residues 275 to 295 form a helical membrane-spanning segment; sequence LLTVALLFILSWLPLWTLMML. The Extracellular portion of the chain corresponds to 296 to 310; sequence SDYADLSPNKLRVIN. A helical membrane pass occupies residues 311-331; the sequence is IYVYPFAHWLAFCNSSVNPII. The Cytoplasmic segment spans residues 332–417; sequence YGFFNENFRS…TGEATNSTET (86 aa). Positions 378-417 are disordered; the sequence is HEPASQNPSGENLGCRKSADNPTQESLMEETGEATNSTET.

Belongs to the G-protein coupled receptor 1 family.

It is found in the cell membrane. In terms of biological role, receptor for NPAF (A-18-F-amide) and NPFF (F-8-F-amide) neuropeptides, also known as morphine-modulating peptides. Can also be activated by a variety of naturally occurring or synthetic FMRF-amide like ligands. This receptor mediates its action by association with G proteins that activate a phosphatidylinositol-calcium second messenger system. The sequence is that of Neuropeptide FF receptor 2 (Npffr2) from Rattus norvegicus (Rat).